A 440-amino-acid polypeptide reads, in one-letter code: Chromosome partition protein MukF (440 aa).

The interval 208–236 is leucine-zipper; it reads LSETSGTLRELQDTLEAAGDKLQANLLRI.

Belongs to the MukF family. Interacts, and probably forms a ternary complex, with MukE and MukB via its C-terminal region. The complex formation is stimulated by calcium or magnesium. It is required for an interaction between MukE and MukB.

The protein resides in the cytoplasm. The protein localises to the nucleoid. Its function is as follows. Involved in chromosome condensation, segregation and cell cycle progression. May participate in facilitating chromosome segregation by condensation DNA from both sides of a centrally located replisome during cell division. Not required for mini-F plasmid partitioning. Probably acts via its interaction with MukB and MukE. Overexpression results in anucleate cells. It has a calcium binding activity. The polypeptide is Chromosome partition protein MukF (Escherichia coli (strain UTI89 / UPEC)).